The chain runs to 472 residues: Na(+)/H(+) antiporter NhaA 1 (472 aa).

11 consecutive transmembrane segments (helical) span residues 34–54, 86–106, 116–136, 146–166, 175–195, 203–223, 227–247, 324–344, 353–373, 394–414, and 428–448; these read TASITLLLAAIAAMVIANSQW, GLMVLFFFLLGLEIKYECLVG, LVIAMAIGGMLLPAGIYAGVA, GWGIPMATDTAFALGILALLG, VTLSALAIVDDMGAVAVIGLF, TSLMYAGLTLGGLFALNVLGF, IFYLVGGILLWWFVLQSGVHA, PVSLIILPIFAFINAGVALPD, VVFIGVASAMVLGKVIGISVF, VFALACLAGVGFTMSLFIASL, and LGILAGSVIAAIIGTTLFLMI.

This sequence belongs to the NhaA Na(+)/H(+) (TC 2.A.33) antiporter family.

Its subcellular location is the cell inner membrane. The enzyme catalyses Na(+)(in) + 2 H(+)(out) = Na(+)(out) + 2 H(+)(in). In terms of biological role, na(+)/H(+) antiporter that extrudes sodium in exchange for external protons. The sequence is that of Na(+)/H(+) antiporter NhaA 1 from Pseudoalteromonas atlantica (strain T6c / ATCC BAA-1087).